A 347-amino-acid chain; its full sequence is tRNA N6-adenosine threonylcarbamoyltransferase (347 aa).

Positions 117 and 121 each coordinate Fe cation. Residues 140–144 (LVSGG), D174, G187, D191, and N281 contribute to the substrate site. Residue D309 participates in Fe cation binding.

It belongs to the KAE1 / TsaD family. Fe(2+) is required as a cofactor.

The protein resides in the cytoplasm. It catalyses the reaction L-threonylcarbamoyladenylate + adenosine(37) in tRNA = N(6)-L-threonylcarbamoyladenosine(37) in tRNA + AMP + H(+). Its function is as follows. Required for the formation of a threonylcarbamoyl group on adenosine at position 37 (t(6)A37) in tRNAs that read codons beginning with adenine. Is involved in the transfer of the threonylcarbamoyl moiety of threonylcarbamoyl-AMP (TC-AMP) to the N6 group of A37, together with TsaE and TsaB. TsaD likely plays a direct catalytic role in this reaction. The sequence is that of tRNA N6-adenosine threonylcarbamoyltransferase from Thermobifida fusca (strain YX).